The primary structure comprises 580 residues: Nuclear body protein SP140-like protein (580 aa).

The HSR domain maps to 33–149 (SLQRLFTEDQ…IYKSFKNAIQ (117 aa)). A disordered region spans residues 155-293 (QESDRKEREE…RSRASRKHKD (139 aa)). Residues 156 to 170 (ESDRKEREERPDIKL) show a composition bias toward basic and acidic residues. Residue lysine 169 forms a Glycyl lysine isopeptide (Lys-Gly) (interchain with G-Cter in SUMO2) linkage. A Phosphoserine modification is found at serine 180. A compositionally biased stretch (basic residues) spans 207–219 (KPKRKRRKKKGHG). A compositionally biased stretch (polar residues) spans 224 to 236 (GTRTQKNNQQNDN). Basic residues predominate over residues 280–290 (QKRVRSRASRK). A Glycyl lysine isopeptide (Lys-Gly) (interchain with G-Cter in SUMO2) cross-link involves residue lysine 292. The region spanning 293 to 374 (DETVDFQAPL…RRLMEEGSLP (82 aa)) is the SAND domain. Residues 403–449 (LDECEVCRDGGELFCCDTCSRVFHEDCHIPPVESEKTPWNCIFCRMK) form a PHD-type zinc finger. One can recognise a Bromo domain in the interval 467–570 (QMCPEEQLKC…AEFEKDFKEV (104 aa)).

The sequence is that of Nuclear body protein SP140-like protein (SP140L) from Homo sapiens (Human).